The primary structure comprises 338 residues: Nucleoid-associated protein CGSHiGG_07705 (338 aa).

This sequence belongs to the YejK family.

The protein resides in the cytoplasm. The protein localises to the nucleoid. This Haemophilus influenzae (strain PittGG) protein is Nucleoid-associated protein CGSHiGG_07705.